A 1034-amino-acid polypeptide reads, in one-letter code: Multidrug export protein AcrF (1034 aa).

The Cytoplasmic portion of the chain corresponds to 1–9; that stretch reads MANFFIRRP. Residues 10-28 form a helical membrane-spanning segment; it reads IFAWVLAIILMMAGALAIL. Residues 29–339 lie on the Periplasmic side of the membrane; that stretch reads QLPVAQYPTI…TPFVQLSIHE (311 aa). Residues 340 to 359 traverse the membrane as a helical segment; that stretch reads VVKTLFEAIMLVFLVMYLFL. At 360–365 the chain is on the cytoplasmic side; it reads QNMRAT. The chain crosses the membrane as a helical span at residues 366–385; sequence LIPTIAVPVVLLGTFAILAA. The Periplasmic segment spans residues 386 to 391; sequence FGYSIN. The helical transmembrane segment at 392–413 threads the bilayer; it reads TLTMFGMVLAIGLLVDDAIVVV. Residues 414 to 441 lie on the Cytoplasmic side of the membrane; it reads ENVERVMMEDKLPPKEATEKSMSQIQGA. A helical membrane pass occupies residues 442–460; that stretch reads LVGIAMVLSAVFIPMAFFG. Over 461 to 473 the chain is Periplasmic; the sequence is GSTGAIYRQFSIT. Residues 474–496 traverse the membrane as a helical segment; sequence IVSAMALSVLVALILTPALCATL. At 497 to 537 the chain is on the cytoplasmic side; that stretch reads LKPVSAEHHENKGGFFGWFNTTFDHSVNHYTNSVGKILGST. A helical transmembrane segment spans residues 538–556; the sequence is GRYLLIYALIVAGMVVLFL. Residues 557 to 871 lie on the Periplasmic side of the membrane; sequence RLPSSFLPEE…SYQERLSGNQ (315 aa). The chain crosses the membrane as a helical span at residues 872–891; sequence APALVAISFVVVFLCLAALY. The Cytoplasmic segment spans residues 892 to 897; that stretch reads ESWSIP. Residues 898-917 form a helical membrane-spanning segment; it reads VSVMLVVPLGIVGVLLAATL. Over 918-923 the chain is Periplasmic; that stretch reads FNQKND. A helical membrane pass occupies residues 924-945; it reads VYFMVGLLTTIGLSAKNAILIV. Residues 946–973 are Cytoplasmic-facing; it reads EFAKDLMEKEGKGVVEATLMAVRMRLRP. A helical membrane pass occupies residues 974–992; it reads ILMTSLAFILGVLPLAISN. Over 993 to 1005 the chain is Periplasmic; the sequence is GAGSGAQNAVGIG. Residues 1006 to 1028 form a helical membrane-spanning segment; sequence VMGGMVSATLLAIFFVPVFFVVI. Residues 1029–1034 lie on the Cytoplasmic side of the membrane; that stretch reads RRCFKG.

Belongs to the resistance-nodulation-cell division (RND) (TC 2.A.6) family. As to quaternary structure, part of the tripartite efflux system AcrEF-TolC, which is composed of an inner membrane transporter, AcrF, a periplasmic membrane fusion protein, AcrE, and an outer membrane component, TolC. The complex forms a large protein conduit and can translocate molecules across both the inner and outer membranes.

The protein localises to the cell inner membrane. In terms of biological role, part of the tripartite efflux system AcrEF-TolC. Involved in the efflux of indole and organic solvents. This Escherichia coli (strain K12) protein is Multidrug export protein AcrF (acrF).